A 252-amino-acid chain; its full sequence is Probable endonuclease 4 (252 aa).

Residues H56, H96, E129, D162, H165, H191, D204, H206, and E233 each contribute to the Zn(2+) site.

Belongs to the AP endonuclease 2 family. Zn(2+) serves as cofactor.

The enzyme catalyses Endonucleolytic cleavage to 5'-phosphooligonucleotide end-products.. Functionally, endonuclease IV plays a role in DNA repair. It cleaves phosphodiester bonds at apurinic or apyrimidinic (AP) sites, generating a 3'-hydroxyl group and a 5'-terminal sugar phosphate. The sequence is that of Probable endonuclease 4 from Mycobacterium tuberculosis (strain ATCC 25177 / H37Ra).